A 254-amino-acid chain; its full sequence is 4-hydroxy-tetrahydrodipicolinate reductase (254 aa).

Residues 8-13, 87-89, and 111-114 each bind NAD(+); these read GASGKM, GTT, and ATNM. The active-site Proton donor/acceptor is the histidine 143. Position 144 (histidine 144) interacts with (S)-2,3,4,5-tetrahydrodipicolinate. Lysine 147 functions as the Proton donor in the catalytic mechanism. Residue 153–154 participates in (S)-2,3,4,5-tetrahydrodipicolinate binding; that stretch reads GT.

Belongs to the DapB family.

It localises to the cytoplasm. It carries out the reaction (S)-2,3,4,5-tetrahydrodipicolinate + NAD(+) + H2O = (2S,4S)-4-hydroxy-2,3,4,5-tetrahydrodipicolinate + NADH + H(+). The enzyme catalyses (S)-2,3,4,5-tetrahydrodipicolinate + NADP(+) + H2O = (2S,4S)-4-hydroxy-2,3,4,5-tetrahydrodipicolinate + NADPH + H(+). Its pathway is amino-acid biosynthesis; L-lysine biosynthesis via DAP pathway; (S)-tetrahydrodipicolinate from L-aspartate: step 4/4. Catalyzes the conversion of 4-hydroxy-tetrahydrodipicolinate (HTPA) to tetrahydrodipicolinate. This is 4-hydroxy-tetrahydrodipicolinate reductase from Campylobacter fetus subsp. fetus (strain 82-40).